We begin with the raw amino-acid sequence, 210 residues long: Thymidylate kinase (210 aa).

9 to 16 (GLEGAGKS) is a binding site for ATP.

This sequence belongs to the thymidylate kinase family.

The enzyme catalyses dTMP + ATP = dTDP + ADP. Its function is as follows. Phosphorylation of dTMP to form dTDP in both de novo and salvage pathways of dTTP synthesis. This is Thymidylate kinase from Aliivibrio fischeri (strain ATCC 700601 / ES114) (Vibrio fischeri).